Reading from the N-terminus, the 1260-residue chain is Agglutinin-like protein 1 (1260 aa).

The N-terminal stretch at 1–17 (MLQQFTLLFLYLSIASA) is a signal peptide. 4 disulfide bridges follow: Cys-73/Cys-150, Cys-96/Cys-112, Cys-205/Cys-298, and Cys-227/Cys-256. ALS repeat units lie at residues 365-396 (TTIT…VDVP), 401-432 (TTVT…VQVP), and 438-469 (VSTT…IREP). N-linked (GlcNAc...) asparagine glycosylation occurs at Asn-471. The ALS 4 repeat unit spans residues 474–505 (VTTTEYWSQSFATTTTVTAPPGETDTVIIREP). N-linked (GlcNAc...) asparagine glycosylation occurs at Asn-507. One copy of the ALS 5 repeat lies at 510–541 (VTTTEYWSQSYATTTTVTAPPGGTDTVLIREP). The N-linked (GlcNAc...) asparagine glycan is linked to Asn-543. The stretch at 546–577 (VTTTEYWSQSYATTTTVTAPPGGTDTVIIREP) is one ALS 6 repeat. Asn-579 carries N-linked (GlcNAc...) asparagine glycosylation. The ALS 7 repeat unit spans residues 582-613 (VTTTEYWSQSYATTTTITAPPGETDTVIIREP). N-linked (GlcNAc...) asparagine glycosylation occurs at Asn-615. The ALS 8 repeat unit spans residues 618-649 (VTTTEYWSQSYATTTTVTAPPGGTDTVLIREP). A glycan (N-linked (GlcNAc...) asparagine) is linked at Asn-651. Residues 654 to 685 (VTTTEYWSQSYATTTTVTAPPGGTDTVLIREP) form an ALS 9 repeat. The N-linked (GlcNAc...) asparagine glycan is linked to Asn-687. One copy of the ALS 10 repeat lies at 690 to 721 (VTTTEYWSQSYATTTTVTAPPGGTDTVIIREP). A glycan (N-linked (GlcNAc...) asparagine) is linked at Asn-723. The ALS 11 repeat unit spans residues 726–757 (VTTTEYWSQSYATTTTVTAPPGGTDTVIIREP). N-linked (GlcNAc...) asparagine glycosylation is present at Asn-759. The stretch at 762-791 (VTTTEYWSQSFATTTTVTAPPGGTDTVIIY) is one ALS 12 repeat. Residues Asn-820, Asn-886, Asn-918, and Asn-973 are each glycosylated (N-linked (GlcNAc...) asparagine). 2 stretches are compositionally biased toward polar residues: residues 896–918 (PTAS…SSDN) and 964–979 (KVTF…GTHD). Disordered regions lie at residues 896-924 (PTAS…KSGV) and 954-1226 (SIPS…SSSP). Residues 980–995 (SQSTSTEIEIVTTSST) show a composition bias toward low complexity. Positions 1002-1062 (VSSNTDLTSE…PTVATSTLAS (61 aa)) are enriched in polar residues. N-linked (GlcNAc...) asparagine glycosylation is found at Asn-1045 and Asn-1068. Positions 1073–1090 (HESASTSLKPSMGENSGL) are enriched in polar residues. Over residues 1091–1110 (TTSTEIEATTTSPTEAPSPA) the composition is skewed to low complexity. The segment covering 1111 to 1154 (VSSGTDVTTEPTDTREQPTTLSTTSKTNSESVATTQATNENGGK) has biased composition (polar residues). 2 stretches are compositionally biased toward low complexity: residues 1155 to 1176 (SPST…SANS) and 1197 to 1226 (SHST…SSSP). A lipid anchor (GPI-anchor amidated glycine) is attached at Gly-1238. Positions 1239–1260 (SGSIIQHSTWLYGLITLLSLFI) are cleaved as a propeptide — removed in mature form.

Belongs to the ALS family. In terms of processing, the GPI-anchor is attached to the protein in the endoplasmic reticulum and serves to target the protein to the cell surface. There, the glucosamine-inositol phospholipid moiety is cleaved off and the GPI-modified mannoprotein is covalently attached via its lipidless GPI glycan remnant to the 1,6-beta-glucan of the outer cell wall layer.

Its subcellular location is the cell membrane. The protein localises to the secreted. It is found in the cell wall. In terms of biological role, major cell surface adhesion protein which mediates both yeast-to-host tissue adherence and yeast aggregation. Acts as a downstream effector of the EFG1 regulatory pathway. Required for rapamycin-induced aggregation of C.albicans. Binds glycans and mediates adherence to endothelial and epithelial cells, thereby playing an important role in the pathogenesis of C.albicans infections. The sequence is that of Agglutinin-like protein 1 (ALS1) from Candida albicans (strain SC5314 / ATCC MYA-2876) (Yeast).